The chain runs to 334 residues: TPR repeat-containing protein MJ0798 (334 aa).

TPR repeat units lie at residues 102 to 135, 137 to 168, 169 to 202, 204 to 235, 236 to 269, 273 to 306, and 308 to 333; these read WKLW…NQNT, LLCK…DRNN, YKAL…NPND, EALE…KPDD, IDLI…NPNV, EQIY…NLYH, and EIYE…YKKL.

The polypeptide is TPR repeat-containing protein MJ0798 (Methanocaldococcus jannaschii (strain ATCC 43067 / DSM 2661 / JAL-1 / JCM 10045 / NBRC 100440) (Methanococcus jannaschii)).